Consider the following 132-residue polypeptide: Protein KRTCAP2 homolog (132 aa).

Transmembrane regions (helical) follow at residues 1–21 (MAVP…LIFS), 35–55 (MATV…LTAV), 69–89 (AKLF…CGMV), and 92–109 (VCAT…YYIN).

This sequence belongs to the KRTCAP2 family. Component of the oligosaccharyltransferase (OST) complex.

It localises to the membrane. Functionally, subunit of the oligosaccharyl transferase (OST) complex that catalyzes the initial transfer of a defined glycan (Glc(3)Man(9)GlcNAc(2) in eukaryotes) from the lipid carrier dolichol-pyrophosphate to an asparagine residue within an Asn-X-Ser/Thr consensus motif in nascent polypeptide chains, the first step in protein N-glycosylation. N-glycosylation occurs cotranslationally and the complex associates with the Sec61 complex at the channel-forming translocon complex that mediates protein translocation across the endoplasmic reticulum (ER). All subunits are required for a maximal enzyme activity. The polypeptide is Protein KRTCAP2 homolog (Aedes aegypti (Yellowfever mosquito)).